The following is a 66-amino-acid chain: Movement protein TGBp3 (66 aa).

Topologically, residues 1 to 2 (MD) are lumenal. Residues 3–23 (FTTLVIIGVYLLVFIVYFAKI) form a helical membrane-spanning segment. Topologically, residues 24 to 66 (NTSMCTISISGASVEISGCDNPALFEILPNLKPFDHGLSVPSI) are cytoplasmic.

Belongs to the Tymovirales TGBp3 protein family.

It localises to the host endoplasmic reticulum membrane. Its function is as follows. Plays a role in viral cell-to-cell propagation, by facilitating genome transport to neighboring plant cells through plasmosdesmata. May induce the formation of granular vesicles derived from the Endoplasmic reticulum, which align on actin filaments. This is Movement protein TGBp3 from Trifolium (WCMV).